The following is a 315-amino-acid chain: Glutathione synthetase (315 aa).

Positions lysine 125–glutamate 310 constitute an ATP-grasp domain. Tryptophan 151–glycine 207 is a binding site for ATP. Mg(2+) contacts are provided by glutamate 281 and asparagine 283.

Belongs to the prokaryotic GSH synthase family. Requires Mg(2+) as cofactor. The cofactor is Mn(2+).

It carries out the reaction gamma-L-glutamyl-L-cysteine + glycine + ATP = glutathione + ADP + phosphate + H(+). The protein operates within sulfur metabolism; glutathione biosynthesis; glutathione from L-cysteine and L-glutamate: step 2/2. The chain is Glutathione synthetase from Escherichia coli O157:H7.